Consider the following 146-residue polypeptide: MGPCNPTNIFLLCKDYEVDFEDLRLTCVFCKNELTTEELLAFALKELSIVWRHNWPFGVCAPCLAREVKVRELRHWDHSCYGPTVEQTTGRSLAELYIRCHACSKPLSIQEKEHQVQAYIHFHYIAGQWTGRCCQCRGPCTARWQP.

Zinc fingers lie at residues 27-63 and 100-136; these read CVFC…CAPC and CHAC…CCQC.

It belongs to the papillomaviridae E6 protein family. Forms homodimers. Interacts with ubiquitin-protein ligase UBE3A/E6-AP; this interaction stimulates UBE3A ubiquitin activity. Interacts with host TP53 and EP300; this interaction inhibits TP53 activity.

The protein resides in the host cytoplasm. Its subcellular location is the host nucleus. Its function is as follows. Plays a major role in the induction and maintenance of cellular transformation. E6 associates with host UBE3A/E6-AP ubiquitin-protein ligase and modulates its activity. Sequesters tumor suppressor TP53 in the host cytoplasm and modulates its activity by interacting with host EP300 that results in the reduction of TP53 acetylation and activation. In turn, apoptosis induced by DNA damage is inhibited. E6 also protects host keratinocytes from apoptosis by mediating the degradation of host BAK1. May also inhibit host immune response. The protein is Protein E6 of Human papillomavirus type 61.